The sequence spans 361 residues: Homocitrate synthase (361 aa).

The 251-residue stretch at M1 to V251 folds into the Pyruvate carboxyltransferase domain. 2-oxoglutarate is bound at residue R8. E9 contributes to the Mg(2+) binding site. Residues H68, R128, and T162 each coordinate 2-oxoglutarate. Mg(2+)-binding residues include H188 and H190. Catalysis depends on H282, which acts as the Proton acceptor.

The protein belongs to the alpha-IPM synthase/homocitrate synthase family. Homocitrate synthase LYS20/LYS21 subfamily. Mg(2+) serves as cofactor. Requires Mn(2+) as cofactor.

It carries out the reaction acetyl-CoA + 2-oxoglutarate + H2O = (2R)-homocitrate + CoA + H(+). Its pathway is amino-acid biosynthesis; L-lysine biosynthesis via AAA pathway; L-alpha-aminoadipate from 2-oxoglutarate: step 1/5. In terms of biological role, catalyzes the aldol-type condensation of 2-oxoglutarate with acetyl-CoA to yield homocitrate. Carries out the first step of the alpha-aminoadipate (AAA) lysine biosynthesis pathway. In Pyrococcus abyssi (strain GE5 / Orsay), this protein is Homocitrate synthase.